A 182-amino-acid chain; its full sequence is Adenine phosphoribosyltransferase (182 aa).

The protein belongs to the purine/pyrimidine phosphoribosyltransferase family. Homodimer.

It is found in the cytoplasm. The enzyme catalyses AMP + diphosphate = 5-phospho-alpha-D-ribose 1-diphosphate + adenine. It functions in the pathway purine metabolism; AMP biosynthesis via salvage pathway; AMP from adenine: step 1/1. In terms of biological role, catalyzes a salvage reaction resulting in the formation of AMP, that is energically less costly than de novo synthesis. In Pseudomonas syringae pv. tomato (strain ATCC BAA-871 / DC3000), this protein is Adenine phosphoribosyltransferase.